The primary structure comprises 338 residues: Lipoate-protein ligase A (338 aa).

One can recognise a BPL/LPL catalytic domain in the interval 29–216 (PATQRVLFLW…AFFAHYGERV (188 aa)). ATP contacts are provided by residues Arg-71, 76–79 (GAVF), and Lys-134. Lys-134 lines the (R)-lipoate pocket.

It belongs to the LplA family. As to quaternary structure, monomer.

It is found in the cytoplasm. The catalysed reaction is L-lysyl-[lipoyl-carrier protein] + (R)-lipoate + ATP = N(6)-[(R)-lipoyl]-L-lysyl-[lipoyl-carrier protein] + AMP + diphosphate + H(+). It functions in the pathway protein modification; protein lipoylation via exogenous pathway; protein N(6)-(lipoyl)lysine from lipoate: step 1/2. It participates in protein modification; protein lipoylation via exogenous pathway; protein N(6)-(lipoyl)lysine from lipoate: step 2/2. Functionally, catalyzes both the ATP-dependent activation of exogenously supplied lipoate to lipoyl-AMP and the transfer of the activated lipoyl onto the lipoyl domains of lipoate-dependent enzymes. In Shigella boydii serotype 18 (strain CDC 3083-94 / BS512), this protein is Lipoate-protein ligase A.